A 1113-amino-acid chain; its full sequence is Sterol regulatory element binding protein sbp-1 (1113 aa).

The segment at 1-52 is transcriptional activation (acidic); sequence MNEEFEGDVPMSDPFLSLVTKLDDIAPFPNNDPLDFDMEHNWQEPGPSQQPD. Disordered stretches follow at residues 24–68, 101–132, 206–274, and 290–345; these read DIAP…EYYD, LGGG…TSPP, SPYD…SPQN, and EVER…SQGT. The segment covering 229–238 has biased composition (basic residues); sequence PHHHHHHPMP. Residues 324-337 are compositionally biased toward acidic residues; sequence AEGDEDEDDEDSDS. The tract at residues 355–368 is basic motif; sequence ERRTAHNLIEKKYR. The bHLH domain maps to 355-405; the sequence is ERRTAHNLIEKKYRCSINDRIQQLKVLLCGDEAKLSKSATLRRAIEHIEEV. The interval 369 to 405 is helix-loop-helix motif; the sequence is CSINDRIQQLKVLLCGDEAKLSKSATLRRAIEHIEEV. Residues 395-422 are a coiled coil; the sequence is LRRAIEHIEEVEHENQVLKHHVEQMRKT. The segment at 437–472 is disordered; sequence TEYSARSPVESSPSPPRNERKRSRMSTTTPMKNGTR. The next 2 membrane-spanning stretches (helical) occupy residues 478–498 and 541–561; these read VTLF…LLAG and MSYV…KLLI.

In terms of processing, processed in the Golgi apparatus, releasing the protein from the membrane. Ubiquitinated; the nuclear form has a rapid turnover and is rapidly ubiquitinated and degraded by the proteasome in the nucleus. Broadly expressed, including many cells in the head. Expressed in the intestine.

The protein resides in the nucleus. It localises to the endoplasmic reticulum membrane. Transcription factor involved in maintaining normal fat levels. Regulates the expression of genes involved in lipid metabolism in response to nutrient availability, such as the fatty-acid desaturases fat-5, fat-6 and fat-7. In response to a high-glucose diet, promotes fatty acid synthesis, elongation and desaturation, acting in concert with transcription factor mxl-3. Plays a role in synthesis of monomethyl branched-chain fatty acids (mmBCFAs) as well as other very-long-chain fatty acids. Downstream of the cis-Golgi membrane protein eas-1/GOLT1B and the E3 ubiquitin ligase rnf-145/RNF145, plays a role in the regulation of glial size, perhaps by modulating synthesis of long-chain polyunsaturated fatty-acids (LC-PUFA). Modulates expression of genes in the one-carbon cycle, which produces the methyl donor S-adenosylmethionine (SAM). Probably involved in a feedback loop in which decreased levels of SAM lead to increased transcriptional activity of sbp-1, thereby causing lipid accumulation. Involved in the negative regulation of zinc homeostasis. Involved in the response to simulated microgravity, in concert with Mediator complex subunit mdt-15, probably acting in the intestine. Plays a role in transgenerational lipid accumulation in response to a high-fat diet, probably acting by upregulating wdr-5.1 expression to increase the level of trimethylated 'Lys-4' histone H3 (H3K4me3), which may then induce the expression of fat-5, fat-6 and fat-7. May act as an oxygen sensor for lipid metabolism. Its function is as follows. Precursor of the transcription factor form, which is embedded in the endoplasmic reticulum membrane. Processing of this form allows release of the transcription factor form that translocates into the nucleus and activates transcription of genes involved in sterol biosynthesis and lipid homeostasis. Functionally, key transcription factor that regulates expression of genes involved in sterol biosynthesis and lipid homeostasis. This is Sterol regulatory element binding protein sbp-1 from Caenorhabditis elegans.